A 141-amino-acid chain; its full sequence is Large ribosomal subunit protein uL16 (141 aa).

Over residues 1 to 17 the composition is skewed to basic residues; sequence MLMPKRTKFRKQMKGRN. Positions 1–22 are disordered; that stretch reads MLMPKRTKFRKQMKGRNRGYAT.

This sequence belongs to the universal ribosomal protein uL16 family. In terms of assembly, part of the 50S ribosomal subunit.

Its function is as follows. Binds 23S rRNA and is also seen to make contacts with the A and possibly P site tRNAs. This Campylobacter curvus (strain 525.92) protein is Large ribosomal subunit protein uL16.